Here is a 522-residue protein sequence, read N- to C-terminus: Protein nucleotidyltransferase YdiU (522 aa).

8 residues coordinate ATP: glycine 109, glycine 111, arginine 112, lysine 132, aspartate 144, glycine 145, arginine 195, and arginine 202. Aspartate 271 functions as the Proton acceptor in the catalytic mechanism. 2 residues coordinate Mg(2+): asparagine 272 and aspartate 281. Residue aspartate 281 participates in ATP binding.

This sequence belongs to the SELO family. Mg(2+) is required as a cofactor. It depends on Mn(2+) as a cofactor.

It catalyses the reaction L-seryl-[protein] + ATP = 3-O-(5'-adenylyl)-L-seryl-[protein] + diphosphate. The enzyme catalyses L-threonyl-[protein] + ATP = 3-O-(5'-adenylyl)-L-threonyl-[protein] + diphosphate. The catalysed reaction is L-tyrosyl-[protein] + ATP = O-(5'-adenylyl)-L-tyrosyl-[protein] + diphosphate. It carries out the reaction L-histidyl-[protein] + UTP = N(tele)-(5'-uridylyl)-L-histidyl-[protein] + diphosphate. It catalyses the reaction L-seryl-[protein] + UTP = O-(5'-uridylyl)-L-seryl-[protein] + diphosphate. The enzyme catalyses L-tyrosyl-[protein] + UTP = O-(5'-uridylyl)-L-tyrosyl-[protein] + diphosphate. Its function is as follows. Nucleotidyltransferase involved in the post-translational modification of proteins. It can catalyze the addition of adenosine monophosphate (AMP) or uridine monophosphate (UMP) to a protein, resulting in modifications known as AMPylation and UMPylation. The chain is Protein nucleotidyltransferase YdiU from Burkholderia cenocepacia (strain HI2424).